Here is a 131-residue protein sequence, read N- to C-terminus: Acanthoscurrin-2 (131 aa).

Position 130 is a lysine amide (Lys-130).

Expressed in hemocytes and secreted into the plasma following bacterial immune challenge.

It is found in the secreted. Its function is as follows. Antimicrobial protein. Strong activity against the Gram-negative bacterium E.coli SBS363 and yeast C.albicans. No detectable activity against the Gram-positive bacterium M.luteus. This Acanthoscurria gomesiana (Tarantula spider) protein is Acanthoscurrin-2.